Reading from the N-terminus, the 208-residue chain is Probable nicotinate-nucleotide adenylyltransferase (208 aa).

Belongs to the NadD family.

The enzyme catalyses nicotinate beta-D-ribonucleotide + ATP + H(+) = deamido-NAD(+) + diphosphate. It participates in cofactor biosynthesis; NAD(+) biosynthesis; deamido-NAD(+) from nicotinate D-ribonucleotide: step 1/1. Functionally, catalyzes the reversible adenylation of nicotinate mononucleotide (NaMN) to nicotinic acid adenine dinucleotide (NaAD). In Acidothermus cellulolyticus (strain ATCC 43068 / DSM 8971 / 11B), this protein is Probable nicotinate-nucleotide adenylyltransferase.